Here is a 346-residue protein sequence, read N- to C-terminus: Phosphoribosylformylglycinamidine cyclo-ligase (346 aa).

It belongs to the AIR synthase family.

Its subcellular location is the cytoplasm. The catalysed reaction is 2-formamido-N(1)-(5-O-phospho-beta-D-ribosyl)acetamidine + ATP = 5-amino-1-(5-phospho-beta-D-ribosyl)imidazole + ADP + phosphate + H(+). It participates in purine metabolism; IMP biosynthesis via de novo pathway; 5-amino-1-(5-phospho-D-ribosyl)imidazole from N(2)-formyl-N(1)-(5-phospho-D-ribosyl)glycinamide: step 2/2. This is Phosphoribosylformylglycinamidine cyclo-ligase from Aliivibrio fischeri (strain ATCC 700601 / ES114) (Vibrio fischeri).